The primary structure comprises 226 residues: UPF0111 protein HI_1603 (226 aa).

It belongs to the UPF0111 family.

The chain is UPF0111 protein HI_1603 from Haemophilus influenzae (strain ATCC 51907 / DSM 11121 / KW20 / Rd).